A 601-amino-acid polypeptide reads, in one-letter code: MQYSRMTATRENPKYKNLRVEECDVLIIGSGPVGATYAREILDPGSGASPGRKAPKVIMVETGAQESKVPGEHKKNAVVYQKHIDSFVNVIQGSLFATSVPTRVDPNLKLPPVSWSPREKQNFNGQNKEQNIYHNLDANGVSRNVGGMSTHWTCATPRQHELERSKIFDDATWDRLYKRAEELIGTRTDVLDQSIRQRLVLDILRKKFKNRDAKALPLAAEKVEGKNLIKWSSSSTVLGNLLEDEKFTLLDQHHCEKLEFNDETNKVSFAIIKNLAKPQTSKEDEDRLRIKAKYVIVCGGPILTPQLLFKSGFRYDEEDAEDSEGNKSSLYIPALGRNLTEQTMCFCQIVLKDKWVEELQKNNWGPECEEHRRKYDEEDDPLRIPFDDLDPQVTLPFTENTPWHTQIHRDAFSYGAVPPAIDKRTIVDLRYFGRAETQWRNRVTFSKKLTDAYGMPQPTFDFKLSTKDRLESHRMMQDMEKVAGELGGYLPGSEPQFLAPGLALHVCGTTAALRKGCRSEDEMKRISVCDENSKVWGVENLHLGGLNVIPGPRSNASNPTLTAMCFAIKGAEEIRRKLGKKGSHSGNRDDGDVDTDTDDDA.

Position 151 is a tele-8alpha-FAD histidine (histidine 151). Substrate is bound by residues glutamine 406 and histidine 408. Catalysis depends on histidine 505, which acts as the Proton acceptor. Asparagine 558 is an active-site residue. The disordered stretch occupies residues 577–601 (KLGKKGSHSGNRDDGDVDTDTDDDA). A compositionally biased stretch (acidic residues) spans 591 to 601 (GDVDTDTDDDA).

It belongs to the GMC oxidoreductase family. Homotetramer. FAD is required as a cofactor.

The catalysed reaction is D-glucose + O2 = 2-dehydro-D-glucose + H2O2. Its function is as follows. Catalyzes the oxidation of various aldopyranoses and disaccharides on carbon-2 to the corresponding 2-keto sugars concomitant with the reduction of O(2) to H(2)O(2). The sequence is that of Pyranose 2-oxidase (p2ox) from Emericella nidulans (strain FGSC A4 / ATCC 38163 / CBS 112.46 / NRRL 194 / M139) (Aspergillus nidulans).